We begin with the raw amino-acid sequence, 367 residues long: Quinolinate synthase (367 aa).

Iminosuccinate is bound by residues histidine 45 and serine 62. Position 109 (cysteine 109) interacts with [4Fe-4S] cluster. Residues 140–142 and serine 161 each bind iminosuccinate; that span reads YVN. Residue cysteine 229 participates in [4Fe-4S] cluster binding. Iminosuccinate is bound by residues 255–257 and threonine 272; that span reads HPE. Cysteine 319 is a [4Fe-4S] cluster binding site.

Belongs to the quinolinate synthase family. Type 3 subfamily. [4Fe-4S] cluster is required as a cofactor.

It is found in the cytoplasm. The enzyme catalyses iminosuccinate + dihydroxyacetone phosphate = quinolinate + phosphate + 2 H2O + H(+). Its pathway is cofactor biosynthesis; NAD(+) biosynthesis; quinolinate from iminoaspartate: step 1/1. In terms of biological role, catalyzes the condensation of iminoaspartate with dihydroxyacetone phosphate to form quinolinate. The polypeptide is Quinolinate synthase (Geobacillus thermodenitrificans (strain NG80-2)).